We begin with the raw amino-acid sequence, 165 residues long: 3-isopropylmalate dehydratase small subunit (165 aa).

It belongs to the LeuD family. LeuD type 2 subfamily. Heterodimer of LeuC and LeuD.

It carries out the reaction (2R,3S)-3-isopropylmalate = (2S)-2-isopropylmalate. It participates in amino-acid biosynthesis; L-leucine biosynthesis; L-leucine from 3-methyl-2-oxobutanoate: step 2/4. Functionally, catalyzes the isomerization between 2-isopropylmalate and 3-isopropylmalate, via the formation of 2-isopropylmaleate. The protein is 3-isopropylmalate dehydratase small subunit of Halothermothrix orenii (strain H 168 / OCM 544 / DSM 9562).